The sequence spans 693 residues: A disintegrin and metalloproteinase with thrombospondin motifs like (693 aa).

Residues 1 to 24 form the signal peptide; sequence MESSVATHWLSAFVILCSFITTQS. Positions 67 to 80 are enriched in polar residues; the sequence is IPTSHPANSNSADS. The interval 67–91 is disordered; sequence IPTSHPANSNSADSGKTPHLKTEKV. N-linked (GlcNAc...) asparagine glycosylation is found at Asn-124 and Asn-194. Positions 353–585 constitute a Peptidase M12B domain; that stretch reads IYPEILVIVD…DTATCLYNSP (233 aa). 2 disulfides stabilise this stretch: Cys-485–Cys-580 and Cys-541–Cys-564. A Zn(2+)-binding site is contributed by His-514. The short motif at 514–525 is the Metal-binding element; that stretch reads HEVGHLLGAVHD. Glu-515 is an active-site residue. Residues His-518 and His-524 each coordinate Zn(2+). Asn-687 carries an N-linked (GlcNAc...) asparagine glycan.

The cofactor is Zn(2+).

It is found in the secreted. Its subcellular location is the extracellular space. It localises to the extracellular matrix. Functionally, involved in larval molting and metamorphosis. May degrade extracellular matrix (ECM) and basement membrane (BM) during the development of organs to allow degeneration and remodeling of tissues. This Bombyx mori (Silk moth) protein is A disintegrin and metalloproteinase with thrombospondin motifs like.